A 540-amino-acid polypeptide reads, in one-letter code: Chaperonin GroEL (540 aa).

ATP contacts are provided by residues 29-32 (TLGP), 86-90 (DGTTT), Gly-413, and Asp-495.

Belongs to the chaperonin (HSP60) family. As to quaternary structure, forms a cylinder of 14 subunits composed of two heptameric rings stacked back-to-back. Interacts with the co-chaperonin GroES.

Its subcellular location is the cytoplasm. The enzyme catalyses ATP + H2O + a folded polypeptide = ADP + phosphate + an unfolded polypeptide.. Together with its co-chaperonin GroES, plays an essential role in assisting protein folding. The GroEL-GroES system forms a nano-cage that allows encapsulation of the non-native substrate proteins and provides a physical environment optimized to promote and accelerate protein folding. This Caldanaerobacter subterraneus subsp. tengcongensis (strain DSM 15242 / JCM 11007 / NBRC 100824 / MB4) (Thermoanaerobacter tengcongensis) protein is Chaperonin GroEL.